We begin with the raw amino-acid sequence, 91 residues long: Acylphosphatase (91 aa).

Residues 3–90 (RVLIRVKGKV…EIYLDFSITQ (88 aa)) form the Acylphosphatase-like domain. Active-site residues include arginine 18 and asparagine 36.

It belongs to the acylphosphatase family.

The enzyme catalyses an acyl phosphate + H2O = a carboxylate + phosphate + H(+). This is Acylphosphatase (acyP) from Shewanella amazonensis (strain ATCC BAA-1098 / SB2B).